We begin with the raw amino-acid sequence, 439 residues long: ATP-dependent protease ATPase subunit HslU (439 aa).

Residues I17, 59–64 (GVGKTE), D251, E317, and R389 contribute to the ATP site.

This sequence belongs to the ClpX chaperone family. HslU subfamily. A double ring-shaped homohexamer of HslV is capped on each side by a ring-shaped HslU homohexamer. The assembly of the HslU/HslV complex is dependent on binding of ATP.

Its subcellular location is the cytoplasm. Functionally, ATPase subunit of a proteasome-like degradation complex; this subunit has chaperone activity. The binding of ATP and its subsequent hydrolysis by HslU are essential for unfolding of protein substrates subsequently hydrolyzed by HslV. HslU recognizes the N-terminal part of its protein substrates and unfolds these before they are guided to HslV for hydrolysis. This is ATP-dependent protease ATPase subunit HslU from Campylobacter jejuni subsp. doylei (strain ATCC BAA-1458 / RM4099 / 269.97).